Reading from the N-terminus, the 286-residue chain is Apoptosis inhibitor 1 (286 aa).

BIR repeat units lie at residues 29-96 (LIER…CAYA) and 131-199 (LQSR…CYFV). Zn(2+)-binding residues include C169, C172, H189, and C196. Residues 238–274 (CKVCLERQRDAVLMPCRHFCVCVQCYFGLDQKCPTCR) form an RING-type zinc finger.

Functionally, acts by blocking cellular apoptosis early in infection. Later, stimulates caspase-3-like protease activity and induces apoptosis, probably to favor the release of occluded virions. The chain is Apoptosis inhibitor 1 (IAP1) from Lepidoptera (butterflies and moths).